An 871-amino-acid polypeptide reads, in one-letter code: Rho guanine nucleotide exchange factor 26 (871 aa).

Disordered regions lie at residues 1–49 (MDGE…LLIT), 86–233 (AQRR…NPSV), and 288–310 (PLGHAGEESEVDNDVDSPGSLRR). Serine 22 carries the post-translational modification Phosphoserine. The segment covering 136 to 156 (PAPPPPPVLRPPRTPNAPAPC) has biased composition (pro residues). Polar residues predominate over residues 173 to 192 (PTANGLAANNDSPGSGSQSG). A Phosphoserine modification is found at serine 392. A DH domain is found at 439–623 (KRQEAIFEVI…SKLVRLCNEG (185 aa)). The 128-residue stretch at 655–782 (WLVKRGELTA…WITALGHSSG (128 aa)) folds into the PH domain. The region spanning 789–850 (TSLTQVEIVR…PMECAKEITC (62 aa)) is the SH3 domain.

In terms of assembly, interacts with ICAM1 and RHOG. As to expression, isoform 1 is broadly expressed, with highest levels in liver (at protein level). Certain mRNA species appear to be specifically expressed in prostate and liver.

The protein localises to the cell projection. It is found in the ruffle. Its function is as follows. Activates RhoG GTPase by promoting the exchange of GDP by GTP. Required for the formation of membrane ruffles during macropinocytosis. Required for the formation of cup-like structures during trans-endothelial migration of leukocytes. In case of Salmonella enterica infection, activated by SopB, which induces cytoskeleton rearrangements and promotes bacterial entry. The chain is Rho guanine nucleotide exchange factor 26 (ARHGEF26) from Homo sapiens (Human).